Reading from the N-terminus, the 273-residue chain is Shikimate dehydrogenase (NADP(+)) (273 aa).

Shikimate is bound by residues 15-17 and T62; that span reads SKS. K66 (proton acceptor) is an active-site residue. D78 is an NADP(+) binding site. The shikimate site is built by N87 and D103. NADP(+)-binding positions include 127–131, 150–155, A218, and G238; these read GAGGA and NRTHTR.

It belongs to the shikimate dehydrogenase family. As to quaternary structure, homodimer.

The catalysed reaction is shikimate + NADP(+) = 3-dehydroshikimate + NADPH + H(+). The protein operates within metabolic intermediate biosynthesis; chorismate biosynthesis; chorismate from D-erythrose 4-phosphate and phosphoenolpyruvate: step 4/7. Its function is as follows. Involved in the biosynthesis of the chorismate, which leads to the biosynthesis of aromatic amino acids. Catalyzes the reversible NADPH linked reduction of 3-dehydroshikimate (DHSA) to yield shikimate (SA). The sequence is that of Shikimate dehydrogenase (NADP(+)) from Yersinia pseudotuberculosis serotype O:1b (strain IP 31758).